A 468-amino-acid polypeptide reads, in one-letter code: Alpha-N-acetylgalactosaminidase (468 aa).

The tat-type signal signal peptide spans 1-30 (MENTRRNFLKKVTAAGIGAAGLAVTDQAMA). Residues 62-63 (SR), D84, 133-136 (WEWH), 154-155 (EV), and N183 each bind NAD(+). Y212 is a binding site for substrate. 243–247 (AEAQW) contacts NAD(+). Residues R248, 260-263 (YPTH), and Y342 contribute to the substrate site. Y260 lines the NAD(+) pocket.

The protein belongs to the Gfo/Idh/MocA family. Glycosyl hydrolase 109 subfamily. NAD(+) is required as a cofactor. In terms of processing, predicted to be exported by the Tat system. The position of the signal peptide cleavage has not been experimentally proven.

It carries out the reaction Cleavage of non-reducing alpha-(1-&gt;3)-N-acetylgalactosamine residues from human blood group A and AB mucin glycoproteins, Forssman hapten and blood group A lacto series glycolipids.. Glycosidase that has specific alpha-N-acetylgalactosaminidase activity. The sequence is that of Alpha-N-acetylgalactosaminidase (nagA) from Tannerella forsythia (Bacteroides forsythus).